The chain runs to 186 residues: Early nodulin-like protein 13 (186 aa).

Residues 1-23 (MAQRTLVATFFLIFFLLTNLVCS) form the signal peptide. One can recognise a Phytocyanin domain in the interval 24-128 (KEIIVGGKTS…GEKLHIVVMS (105 aa)). Residues cysteine 82 and cysteine 116 are joined by a disulfide bond. 2 N-linked (GlcNAc...) asparagine glycosylation sites follow: asparagine 83 and asparagine 90. A lipid anchor (GPI-anchor amidated alanine) is attached at alanine 165. Positions 166-186 (SSLTRQVGVLGFVGLLAIVLL) are cleaved as a propeptide — removed in mature form.

It belongs to the early nodulin-like (ENODL) family. As to expression, mostly expressed in seedlings, siliques and flowers, and, to a lower extent, in roots, stems and seeds, but barely in leaves.

The protein localises to the cell membrane. Functionally, may act as a carbohydrate transporter. Required, together with ENODL11, ENODL12, ENODL13, ENODL14 and ENODL15, for male-female communication and pollen tube reception and burst at the synergid cell surface of the female gametophyte. The sequence is that of Early nodulin-like protein 13 from Arabidopsis thaliana (Mouse-ear cress).